Consider the following 25-residue polypeptide: Xenoposin precursor fragment BM3 (25 aa).

As to expression, expressed by the skin glands.

It localises to the secreted. In terms of biological role, antimicrobial peptide. The chain is Xenoposin precursor fragment BM3 from Xenopus boumbaensis (Mawa clawed frog).